Reading from the N-terminus, the 234-residue chain is Peroxisomal coenzyme A diphosphatase ndx-8 (234 aa).

One can recognise a Nudix hydrolase domain in the interval 27–162; that stretch reads EQDAGVLILL…TFLIDEFYMV (136 aa). A Nudix box motif is present at residues 66–90; sequence GGMMDDEDGQNVRRTAIREAYEEVG. Glu-84 and Glu-88 together coordinate Mg(2+). A helical membrane pass occupies residues 170–190; that stretch reads YPTTYGVTALMCIVVAIGLLG. A Microbody targeting signal motif is present at residues 232–234; that stretch reads SKI.

The protein belongs to the Nudix hydrolase family. Mg(2+) is required as a cofactor. Mn(2+) serves as cofactor.

It localises to the peroxisome membrane. Coenzyme A diphosphatase which mediates the cleavage of CoA into 3',5'-ADP and 4'-phosphopantetheine. The chain is Peroxisomal coenzyme A diphosphatase ndx-8 (ndx-8) from Caenorhabditis elegans.